Here is a 1269-residue protein sequence, read N- to C-terminus: Protein strawberry notch homolog 1 (1269 aa).

The segment at 21 to 47 (NDLFDVDGGDAGLATPTPPSVQQQQPP) is disordered. Lys-113 bears the N6-acetyllysine mark. Phosphoserine is present on residues Ser-126 and Ser-178. The residue at position 377 (Lys-377) is an N6-acetyllysine. Residues 652–725 (PSNNSSPRDS…SLITSQDAVE (74 aa)) form a disordered region. 3 positions are modified to phosphoserine: Ser-656, Ser-657, and Ser-661. A compositionally biased stretch (acidic residues) spans 679 to 693 (SGSESDVSDNEESDY). Phosphoserine occurs at positions 700 and 701. Residues 719-746 (TSQDAVERAQQMKKDLLDKLEKLAEDLP) adopt a coiled-coil conformation. Lys-1098 is modified (N6-acetyllysine). At Ser-1262 the chain carries Phosphoserine.

It belongs to the SBNO family.

The protein localises to the nucleus. Functionally, plays a crucial role in the regulation of neural stem cells (NSCs) proliferation. Enhances the phosphorylation of GSK3B through the PI3K-Akt signaling pathway, thereby upregulating the Wnt/beta-catenin signaling pathway and promoting the proliferation of NSCs. Improves ischemic stroke recovery while inhibiting neuroinflammation through small extracellular vesicles (sEVs)-mediated mechanism. Enhances the secretion of sEVs from NSCs, which in turn inhibit both the MAPK and NF-kappaB pathways in microglia. This inhibition suppresses the pro-inflammatory M1 polarization of microglia, promoting a shift towards the M2 anti-inflammatory phenotype, which is beneficial for reducing neuroinflammation. This Rattus norvegicus (Rat) protein is Protein strawberry notch homolog 1 (Sbno1).